A 238-amino-acid polypeptide reads, in one-letter code: Ribose-5-phosphate isomerase A (238 aa).

Substrate-binding positions include 30-33 (SGST), 87-90 (DGAD), and 100-103 (KGGG). Catalysis depends on Glu-109, which acts as the Proton acceptor. Residue Lys-127 coordinates substrate.

The protein belongs to the ribose 5-phosphate isomerase family. In terms of assembly, homodimer.

The enzyme catalyses aldehydo-D-ribose 5-phosphate = D-ribulose 5-phosphate. It participates in carbohydrate degradation; pentose phosphate pathway; D-ribose 5-phosphate from D-ribulose 5-phosphate (non-oxidative stage): step 1/1. In terms of biological role, catalyzes the reversible conversion of ribose-5-phosphate to ribulose 5-phosphate. The chain is Ribose-5-phosphate isomerase A from Synechococcus sp. (strain WH7803).